A 69-amino-acid chain; its full sequence is Sec-independent protein translocase protein TatA (69 aa).

A helical transmembrane segment spans residues 1-21 (MGSLSIWHWLIVLAIALLLFG). Residues 41-69 (KGMNDDEETPPPAQSTTSRTVEHKADESK) form a disordered region. Positions 60-69 (TVEHKADESK) are enriched in basic and acidic residues.

The protein belongs to the TatA/E family. The Tat system comprises two distinct complexes: a TatABC complex, containing multiple copies of TatA, TatB and TatC subunits, and a separate TatA complex, containing only TatA subunits. Substrates initially bind to the TatABC complex, which probably triggers association of the separate TatA complex to form the active translocon.

The protein resides in the cell inner membrane. In terms of biological role, part of the twin-arginine translocation (Tat) system that transports large folded proteins containing a characteristic twin-arginine motif in their signal peptide across membranes. TatA could form the protein-conducting channel of the Tat system. This Rhizobium rhizogenes (strain K84 / ATCC BAA-868) (Agrobacterium radiobacter) protein is Sec-independent protein translocase protein TatA.